We begin with the raw amino-acid sequence, 854 residues long: Protein mono-ADP-ribosyltransferase PARP9 (854 aa).

2 consecutive Macro domains span residues 107–296 and 306–487; these read LQVF…EFIL and TPSF…AKRS. The PARP catalytic domain maps to 628–850; that stretch reads IQQQKTQDEM…QHPWRGFASG (223 aa).

The protein belongs to the ARTD/PARP family. As to quaternary structure, forms a stable complex with E3 ligase DTX3L; the interaction is required for PARP9 mediated ADP-ribosylation of ubiquitin. Interacts (via PARP catalytic domain) with DTX3L (via N-terminus). Forms a complex with STAT1 and DTX3L independently of IFNB1 or IFNG-mediated STAT1 'Tyr-701' phosphorylation. Forms a complex with STAT1, DTX3L and histone H2B H2BC9/H2BJ; the interaction is likely to induce H2BC9/H2BJ ubiquitination. Interacts (via N-terminus) with STAT1. Interacts with PARP14 in IFNG-stimulated macrophages; the interaction prevents PARP14-mediated STAT1 and STAT6 ADP-riboslylation. Interacts with PARP1 (when poly-ADP-ribosylated). Post-translationally, ADP-ribosylated by PARP14. As to expression, expressed in lymphocyte-rich tissues, spleen, lymph nodes, peripheral blood lymphocytes and colonic mucosa. Expressed in macrophages. Also expressed in nonhematopoietic tissues such as heart and skeletal muscle. Isoform 2 is the predominant form. Most abundantly expressed in lymphomas with a brisk host inflammatory response. In diffuse large B-cell lymphomas tumors, expressed specifically by malignant B-cells.

The protein localises to the cytoplasm. It localises to the cytosol. Its subcellular location is the nucleus. It carries out the reaction [protein]-C-terminal glycine + NAD(+) = [protein]-C-terminal O-(ADP-D-ribosyl)-glycine + nicotinamide. With respect to regulation, binding to poly(ADP-ribose) does not affect its activity. Its function is as follows. ADP-ribosyltransferase which, in association with E3 ligase DTX3L, plays a role in DNA damage repair and in immune responses including interferon-mediated antiviral defenses. Within the complex, enhances DTX3L E3 ligase activity which is further enhanced by PARP9 binding to poly(ADP-ribose). In association with DTX3L and in presence of E1 and E2 enzymes, mediates NAD(+)-dependent mono-ADP-ribosylation of ubiquitin which prevents ubiquitin conjugation to substrates such as histones. During DNA repair, PARP1 recruits PARP9/BAL1-DTX3L complex to DNA damage sites via PARP9 binding to ribosylated PARP1. Subsequent PARP1-dependent PARP9/BAL1-DTX3L-mediated ubiquitination promotes the rapid and specific recruitment of 53BP1/TP53BP1, UIMC1/RAP80, and BRCA1 to DNA damage sites. In response to DNA damage, PARP9-DTX3L complex is required for efficient non-homologous end joining (NHEJ); the complex function is negatively modulated by PARP9 activity. Dispensable for B-cell receptor (BCR) assembly through V(D)J recombination and class switch recombination (CSR). In macrophages, positively regulates pro-inflammatory cytokines production in response to IFNG stimulation by suppressing PARP14-mediated STAT1 ADP-ribosylation and thus promoting STAT1 phosphorylation. Also suppresses PARP14-mediated STAT6 ADP-ribosylation. The protein is Protein mono-ADP-ribosyltransferase PARP9 (PARP9) of Homo sapiens (Human).